We begin with the raw amino-acid sequence, 349 residues long: tRNA N6-adenosine threonylcarbamoyltransferase (349 aa).

Fe cation contacts are provided by His-117, His-121, and Tyr-138. Residues 138–142 (YVAGG), Asp-170, Asp-191, and Asn-271 contribute to the substrate site. Fe cation is bound at residue Asp-299.

This sequence belongs to the KAE1 / TsaD family. Fe(2+) is required as a cofactor.

The protein localises to the cytoplasm. It catalyses the reaction L-threonylcarbamoyladenylate + adenosine(37) in tRNA = N(6)-L-threonylcarbamoyladenosine(37) in tRNA + AMP + H(+). In terms of biological role, required for the formation of a threonylcarbamoyl group on adenosine at position 37 (t(6)A37) in tRNAs that read codons beginning with adenine. Is probably involved in the transfer of the threonylcarbamoyl moiety of threonylcarbamoyl-AMP (TC-AMP) to the N6 group of A37. This chain is tRNA N6-adenosine threonylcarbamoyltransferase, found in Aeropyrum pernix (strain ATCC 700893 / DSM 11879 / JCM 9820 / NBRC 100138 / K1).